A 418-amino-acid polypeptide reads, in one-letter code: Glutamyl-tRNA reductase (418 aa).

Residues 49 to 52 (TCNR), S105, 110 to 112 (EPQ), and Q116 each bind substrate. The active-site Nucleophile is the C50. 185–190 (GAGEMI) serves as a coordination point for NADP(+).

It belongs to the glutamyl-tRNA reductase family. As to quaternary structure, homodimer.

It carries out the reaction (S)-4-amino-5-oxopentanoate + tRNA(Glu) + NADP(+) = L-glutamyl-tRNA(Glu) + NADPH + H(+). It participates in porphyrin-containing compound metabolism; protoporphyrin-IX biosynthesis; 5-aminolevulinate from L-glutamyl-tRNA(Glu): step 1/2. Its function is as follows. Catalyzes the NADPH-dependent reduction of glutamyl-tRNA(Glu) to glutamate 1-semialdehyde (GSA). This chain is Glutamyl-tRNA reductase, found in Aromatoleum aromaticum (strain DSM 19018 / LMG 30748 / EbN1) (Azoarcus sp. (strain EbN1)).